Reading from the N-terminus, the 261-residue chain is Cytochrome c oxidase subunit 3 (261 aa).

Residues 1 to 15 (MTHQTHAYHMVNPSP) lie on the Mitochondrial matrix side of the membrane. The chain crosses the membrane as a helical span at residues 16 to 34 (WPLTGALSALLMTSGLIMW). Residues 35–40 (FHFNST) are Mitochondrial intermembrane-facing. The chain crosses the membrane as a helical span at residues 41 to 66 (TLLMLGLTTNMLTMYQWWRDVVREST). Topologically, residues 67–72 (FQGHHT) are mitochondrial matrix. A helical membrane pass occupies residues 73-105 (PNVQKGLRYGMILFIISEVLFFTGFFWAFYHSS). Residues 106 to 128 (LAPTPELGGCWPPTGINPLNPLE) are Mitochondrial intermembrane-facing. Residues 129–152 (VPLLNTSVLLASGVSITWAHHSLM) traverse the membrane as a helical segment. Residues 153–155 (EGN) lie on the Mitochondrial matrix side of the membrane. Residues 156–183 (RNHMLQALFITIALGVYFTLLQASEYYE) form a helical membrane-spanning segment. Topologically, residues 184-190 (APFTISD) are mitochondrial intermembrane. A helical transmembrane segment spans residues 191–223 (GVYGSTFFVATGFHGLHVIIGSTFLIVCFFRQL). The Mitochondrial matrix segment spans residues 224–232 (KFHFTSNHH). The helical transmembrane segment at 233 to 256 (FGFEAAAWYWHFVDVVWLFLYVSI) threads the bilayer. The Mitochondrial intermembrane portion of the chain corresponds to 257-261 (YWWGS).

The protein belongs to the cytochrome c oxidase subunit 3 family. Component of the cytochrome c oxidase (complex IV, CIV), a multisubunit enzyme composed of 14 subunits. The complex is composed of a catalytic core of 3 subunits MT-CO1, MT-CO2 and MT-CO3, encoded in the mitochondrial DNA, and 11 supernumerary subunits COX4I, COX5A, COX5B, COX6A, COX6B, COX6C, COX7A, COX7B, COX7C, COX8 and NDUFA4, which are encoded in the nuclear genome. The complex exists as a monomer or a dimer and forms supercomplexes (SCs) in the inner mitochondrial membrane with NADH-ubiquinone oxidoreductase (complex I, CI) and ubiquinol-cytochrome c oxidoreductase (cytochrome b-c1 complex, complex III, CIII), resulting in different assemblies (supercomplex SCI(1)III(2)IV(1) and megacomplex MCI(2)III(2)IV(2)).

The protein localises to the mitochondrion inner membrane. It carries out the reaction 4 Fe(II)-[cytochrome c] + O2 + 8 H(+)(in) = 4 Fe(III)-[cytochrome c] + 2 H2O + 4 H(+)(out). In terms of biological role, component of the cytochrome c oxidase, the last enzyme in the mitochondrial electron transport chain which drives oxidative phosphorylation. The respiratory chain contains 3 multisubunit complexes succinate dehydrogenase (complex II, CII), ubiquinol-cytochrome c oxidoreductase (cytochrome b-c1 complex, complex III, CIII) and cytochrome c oxidase (complex IV, CIV), that cooperate to transfer electrons derived from NADH and succinate to molecular oxygen, creating an electrochemical gradient over the inner membrane that drives transmembrane transport and the ATP synthase. Cytochrome c oxidase is the component of the respiratory chain that catalyzes the reduction of oxygen to water. Electrons originating from reduced cytochrome c in the intermembrane space (IMS) are transferred via the dinuclear copper A center (CU(A)) of subunit 2 and heme A of subunit 1 to the active site in subunit 1, a binuclear center (BNC) formed by heme A3 and copper B (CU(B)). The BNC reduces molecular oxygen to 2 water molecules using 4 electrons from cytochrome c in the IMS and 4 protons from the mitochondrial matrix. This Gazella leptoceros (Sand gazelle) protein is Cytochrome c oxidase subunit 3 (MT-CO3).